Consider the following 405-residue polypeptide: Tryptophan synthase beta chain (405 aa).

N6-(pyridoxal phosphate)lysine is present on K95.

It belongs to the TrpB family. Tetramer of two alpha and two beta chains. It depends on pyridoxal 5'-phosphate as a cofactor.

It catalyses the reaction (1S,2R)-1-C-(indol-3-yl)glycerol 3-phosphate + L-serine = D-glyceraldehyde 3-phosphate + L-tryptophan + H2O. It participates in amino-acid biosynthesis; L-tryptophan biosynthesis; L-tryptophan from chorismate: step 5/5. Functionally, the beta subunit is responsible for the synthesis of L-tryptophan from indole and L-serine. This chain is Tryptophan synthase beta chain, found in Pseudomonas putida (strain ATCC 47054 / DSM 6125 / CFBP 8728 / NCIMB 11950 / KT2440).